Here is a 173-residue protein sequence, read N- to C-terminus: ATP synthase subunit b 1 (173 aa).

A helical transmembrane segment spans residues 15–37; the sequence is TFWVTVAVLIFLAFFGRKIVGAI.

This sequence belongs to the ATPase B chain family. In terms of assembly, F-type ATPases have 2 components, F(1) - the catalytic core - and F(0) - the membrane proton channel. F(1) has five subunits: alpha(3), beta(3), gamma(1), delta(1), epsilon(1). F(0) has three main subunits: a(1), b(2) and c(10-14). The alpha and beta chains form an alternating ring which encloses part of the gamma chain. F(1) is attached to F(0) by a central stalk formed by the gamma and epsilon chains, while a peripheral stalk is formed by the delta and b chains.

It localises to the cell inner membrane. F(1)F(0) ATP synthase produces ATP from ADP in the presence of a proton or sodium gradient. F-type ATPases consist of two structural domains, F(1) containing the extramembraneous catalytic core and F(0) containing the membrane proton channel, linked together by a central stalk and a peripheral stalk. During catalysis, ATP synthesis in the catalytic domain of F(1) is coupled via a rotary mechanism of the central stalk subunits to proton translocation. Functionally, component of the F(0) channel, it forms part of the peripheral stalk, linking F(1) to F(0). The protein is ATP synthase subunit b 1 of Acidiphilium cryptum (strain JF-5).